A 141-amino-acid chain; its full sequence is Regulator of ribonuclease activity B (141 aa).

A compositionally biased stretch (acidic residues) spans 119–132 (DEDFDDEDDDEDYD). The tract at residues 119–141 (DEDFDDEDDDEDYDKDGFPIERH) is disordered.

It belongs to the RraB family. In terms of assembly, interacts with the C-terminal region of Rne.

It localises to the cytoplasm. In terms of biological role, globally modulates RNA abundance by binding to RNase E (Rne) and regulating its endonucleolytic activity. Can modulate Rne action in a substrate-dependent manner by altering the composition of the degradosome. The polypeptide is Regulator of ribonuclease activity B (Shewanella amazonensis (strain ATCC BAA-1098 / SB2B)).